We begin with the raw amino-acid sequence, 60 residues long: Defensin-like protein 4 (60 aa).

Intrachain disulfides connect Cys-4/Cys-56, Cys-17/Cys-41, Cys-26/Cys-51, and Cys-30/Cys-53.

It belongs to the DEFL family. Protease inhibitor I18 (RTI/MTI-2) subfamily.

It is found in the secreted. Inhibits trypsin and chymotrypsin. The sequence is that of Defensin-like protein 4 from Brassica napus (Rape).